The chain runs to 295 residues: MSKDIATPGKTTEILKKYGFLFKKSLGQNFLIDSNILTRITDTAGISKETNVIEIGPGIGALTEQLAKTANEVVAFEIDQRLLPILDDTLSAYNNIQVVHGDVLKADVEEVITQQFSKSELPLKIVANLPYYVTTPIILKLLHDNIPADSMTFMLQKEVADRISAVPSTKSYGSLTIAIQFYMEAELAFIVPKTVFMPQPNVDSAVIHLKRRKEPLAKVNDEEFFFEVTRASFAQRRKTLWNNLASKFPALKPRKDELVEGLNAIGIDLIRRGETLDIPEFAKLSNFLADFLEEK.

S-adenosyl-L-methionine is bound by residues Asn29, Leu31, Gly56, Glu77, Asp102, and Asn128.

It belongs to the class I-like SAM-binding methyltransferase superfamily. rRNA adenine N(6)-methyltransferase family. RsmA subfamily.

The protein localises to the cytoplasm. It catalyses the reaction adenosine(1518)/adenosine(1519) in 16S rRNA + 4 S-adenosyl-L-methionine = N(6)-dimethyladenosine(1518)/N(6)-dimethyladenosine(1519) in 16S rRNA + 4 S-adenosyl-L-homocysteine + 4 H(+). Its function is as follows. Specifically dimethylates two adjacent adenosines (A1518 and A1519) in the loop of a conserved hairpin near the 3'-end of 16S rRNA in the 30S particle. May play a critical role in biogenesis of 30S subunits. The polypeptide is Ribosomal RNA small subunit methyltransferase A (Listeria welshimeri serovar 6b (strain ATCC 35897 / DSM 20650 / CCUG 15529 / CIP 8149 / NCTC 11857 / SLCC 5334 / V8)).